A 143-amino-acid chain; its full sequence is Large ribosomal subunit protein uL11 (143 aa).

It belongs to the universal ribosomal protein uL11 family. Part of the ribosomal stalk of the 50S ribosomal subunit. Interacts with L10 and the large rRNA to form the base of the stalk. L10 forms an elongated spine to which L12 dimers bind in a sequential fashion forming a multimeric L10(L12)X complex. Post-translationally, one or more lysine residues are methylated.

Functionally, forms part of the ribosomal stalk which helps the ribosome interact with GTP-bound translation factors. The chain is Large ribosomal subunit protein uL11 from Bifidobacterium longum (strain DJO10A).